The chain runs to 403 residues: 8-amino-7-oxononanoate synthase (403 aa).

Residue Arg30 participates in substrate binding. Position 121 to 122 (121 to 122 (GY)) interacts with pyridoxal 5'-phosphate. His146 provides a ligand contact to substrate. Ser192, His220, and Thr248 together coordinate pyridoxal 5'-phosphate. Lys251 carries the N6-(pyridoxal phosphate)lysine modification. Thr367 contributes to the substrate binding site.

Belongs to the class-II pyridoxal-phosphate-dependent aminotransferase family. BioF subfamily. Homodimer. Pyridoxal 5'-phosphate is required as a cofactor.

The catalysed reaction is 6-carboxyhexanoyl-[ACP] + L-alanine + H(+) = (8S)-8-amino-7-oxononanoate + holo-[ACP] + CO2. It functions in the pathway cofactor biosynthesis; biotin biosynthesis. Functionally, catalyzes the decarboxylative condensation of pimeloyl-[acyl-carrier protein] and L-alanine to produce 8-amino-7-oxononanoate (AON), [acyl-carrier protein], and carbon dioxide. In Burkholderia vietnamiensis (strain G4 / LMG 22486) (Burkholderia cepacia (strain R1808)), this protein is 8-amino-7-oxononanoate synthase.